Consider the following 487-residue polypeptide: Protein DETOXIFICATION 10 (487 aa).

12 consecutive transmembrane segments (helical) span residues 35–55 (LICF…IQII), 73–93 (FAVS…SCAL), 122–142 (LVCL…VILG), 155–175 (AAWL…IRYF), 184–204 (LLVT…LLVY), 211–231 (IGGA…LGSF), 264–284 (AAML…SGLL), 293–313 (VLSI…AIAA), 333–353 (IVVY…SMSL), 377–397 (MAPL…LSGV), 412–432 (FGAF…WVHL), and 435–455 (VGLW…LALV).

The protein belongs to the multi antimicrobial extrusion (MATE) (TC 2.A.66.1) family.

The protein resides in the membrane. This is Protein DETOXIFICATION 10 from Arabidopsis thaliana (Mouse-ear cress).